The chain runs to 317 residues: tRNA dimethylallyltransferase (317 aa).

Residue 14 to 21 (GPTASGKT) coordinates ATP. 16-21 (TASGKT) lines the substrate pocket. Interaction with substrate tRNA regions lie at residues 39–42 (DSAL) and 163–167 (QRIQR).

It belongs to the IPP transferase family. Monomer. It depends on Mg(2+) as a cofactor.

It catalyses the reaction adenosine(37) in tRNA + dimethylallyl diphosphate = N(6)-dimethylallyladenosine(37) in tRNA + diphosphate. In terms of biological role, catalyzes the transfer of a dimethylallyl group onto the adenine at position 37 in tRNAs that read codons beginning with uridine, leading to the formation of N6-(dimethylallyl)adenosine (i(6)A). The sequence is that of tRNA dimethylallyltransferase from Stenotrophomonas maltophilia (strain R551-3).